The chain runs to 804 residues: MYNHKVVEKKWQKYWLENKTFKTGTDPEKPKYYVLDMFPYPSGKGLHVGHPEGYTATDIMARMKRAQGYNVLHPMGWDAFGLPAEQYALQTGNDPATFTDENIAHFKKQLQALGFSYDWDREIKTTDPNYYKWTQWIFEQMYKMGLAYEAEVPVNWSPDLGTVVANEEVIDGKTERGGYPVYRRKMRQWMLKITAYADRLLDDLDDLDWPEPIKEMQRNWIGRSVGAQVTFKIKDSDKSFAVFTTRPDTLFGCSYTVLAPENELVKEITSPEQKEAVDAYIKSIESKSDLERTDLNKDKTGVFTGAYAINPVNGEEVPVWISDYVLATYGTGAVIAVPAHDERDYAFATKFDLPIKEVVEGGDISKEAFAGDGVHVNSDFLNGLHNEEAKAKMVDWLTEKGVGEKKVNYKMRDWNFSRQRYWGEPIPVIHWEDGETTLVPEDELPLRLPKESNIKPSGTPESPLANLTDWVNVVDENGRKGKRETNTMPQWAGSSWYFLRYIDPHNDKALADPELLKKWMPVDLYIGGAEHATLHLLYARFWHKVLYDLGVVPTKEPFQKLYNQGLILKNHEKMSKSRGNVVNPDDVVDEYGADSLRTYEMFMGPLNASIDWDDNGPSGVKKFLDRVWRTFVNDLDLDPIPSEKITDKNDGKLDKIYNETVKTVTEHFEELRFNTAISQMMVFMNACQKVDKIPREYAEGFVKLMAPVAPHMMEEIWHVFGHDESVQFAAWPTYDASKLVESTVEMAVTVNGKKRGNFQIAKDASREEAQAAATALPHVKEFLEGKEIKKVIVVPNKIVNIVAK.

The short motif at 39 to 50 (PYPSGKGLHVGH) is the 'HIGH' region element. Residues 573 to 577 (KMSKS) carry the 'KMSKS' region motif. K576 contributes to the ATP binding site.

Belongs to the class-I aminoacyl-tRNA synthetase family.

It is found in the cytoplasm. It catalyses the reaction tRNA(Leu) + L-leucine + ATP = L-leucyl-tRNA(Leu) + AMP + diphosphate. This is Leucine--tRNA ligase from Lactobacillus delbrueckii subsp. bulgaricus (strain ATCC BAA-365 / Lb-18).